The sequence spans 330 residues: MKNTSDYGVLMMNLGTPDAPQTPEVRRYLREFLSDSRVVDLNPLIWKPILNLIILTIRPPKVAKIYQQVWMDEGSPLLVLSERLKEKVKEALSEKKGQTVPVELAMTYGNPSVEVAANKLREQGVKNIIVIPMYPQFSATTTAAAYDRLMKSLKNCPHWPSLQLLHDYADHPMYIKALSNSVRAQWDKQGERRHLVLSYHGIPKRYVTNGDPYARRCETTSRLVAEELELGDHEWTHVYQSRFGREEWLKPYADATLKALPSMGVKKINIISPAFSIDCIETLEEVTLELGDEFKNNGGLAFDYIPALNDTPDQVALYVNLIEQNSKQWT.

The Fe cation site is built by His-200 and Glu-281.

It belongs to the ferrochelatase family.

It is found in the cytoplasm. The catalysed reaction is heme b + 2 H(+) = protoporphyrin IX + Fe(2+). The protein operates within porphyrin-containing compound metabolism; protoheme biosynthesis; protoheme from protoporphyrin-IX: step 1/1. Catalyzes the ferrous insertion into protoporphyrin IX. This chain is Ferrochelatase, found in Marinomonas sp. (strain MWYL1).